Here is a 325-residue protein sequence, read N- to C-terminus: Leucine-rich repeat protein FLOR 1 (325 aa).

10 LRR repeats span residues 65-88, 89-114, 115-140, 142-162, 163-185, 187-211, 213-233, 234-256, 257-280, and 281-305; these read NRRV…QIGD, LVDL…ITKL, KNLN…ELKS, TFLD…LSQM, PKLE…SFGS, VGNV…LSKY, FNAV…FFGR, NKTT…KVKF, ARSI…ALTK, and LHLE…LLQT.

Belongs to the polygalacturonase-inhibiting protein family. Interacts with MADS domain transcription factors during flower development. Component of a complex made of FLOR1, VSP1 and AGAMOUS (AG). Binds directly with AG. As to expression, confined to flowers and inflorescences (e.g. inflorescence meristems, floral meristems, stamens and carpels).

It localises to the cytoplasm. It is found in the nucleus. The protein resides in the perinuclear region. The protein localises to the cell membrane. In terms of biological role, promotes flowering transition in long days (LD). This Arabidopsis thaliana (Mouse-ear cress) protein is Leucine-rich repeat protein FLOR 1.